Here is a 304-residue protein sequence, read N- to C-terminus: Undecaprenyl-diphosphatase (304 aa).

Transmembrane regions (helical) follow at residues 5-25 (FLFI…EFVP), 47-67 (GFPE…VVVL), 72-92 (ISSS…LKAS), 111-131 (FGIN…LFHD), 137-157 (LFST…LIVI), 209-231 (ISGL…AMVG), 248-268 (TNLI…LVVI), and 282-302 (IFAI…FTKV).

It belongs to the UppP family.

It localises to the cell membrane. The catalysed reaction is di-trans,octa-cis-undecaprenyl diphosphate + H2O = di-trans,octa-cis-undecaprenyl phosphate + phosphate + H(+). Catalyzes the dephosphorylation of undecaprenyl diphosphate (UPP). Confers resistance to bacitracin. The protein is Undecaprenyl-diphosphatase of Clostridium perfringens (strain SM101 / Type A).